Consider the following 409-residue polypeptide: Serine/threonine transporter SstT (409 aa).

The next 9 membrane-spanning stretches (helical) occupy residues 17-37, 49-69, 83-103, 142-162, 180-200, 218-238, 301-321, 331-351, and 357-377; these read LVGQ…FFPA, FVSA…MASI, ILLL…IASF, ALIS…GIAF, VSLI…GLVA, LVVL…LIVF, GAAI…GIAV, VVAS…LLLI, and LFGI…IIAI.

The protein belongs to the dicarboxylate/amino acid:cation symporter (DAACS) (TC 2.A.23) family.

The protein localises to the cell inner membrane. It catalyses the reaction L-serine(in) + Na(+)(in) = L-serine(out) + Na(+)(out). It carries out the reaction L-threonine(in) + Na(+)(in) = L-threonine(out) + Na(+)(out). Functionally, involved in the import of serine and threonine into the cell, with the concomitant import of sodium (symport system). The chain is Serine/threonine transporter SstT from Pseudomonas aeruginosa (strain LESB58).